The primary structure comprises 363 residues: DNA replication and repair protein RecF (363 aa).

G30 to T37 provides a ligand contact to ATP.

It belongs to the RecF family.

It localises to the cytoplasm. Its function is as follows. The RecF protein is involved in DNA metabolism; it is required for DNA replication and normal SOS inducibility. RecF binds preferentially to single-stranded, linear DNA. It also seems to bind ATP. The chain is DNA replication and repair protein RecF from Chlorobium limicola (strain DSM 245 / NBRC 103803 / 6330).